Consider the following 189-residue polypeptide: Parkinson disease protein 7 homolog (189 aa).

A2 carries the N-acetylalanine modification. Residues C46 and C53 are each lipidated (S-palmitoyl cysteine). Y67 bears the Phosphotyrosine mark. C106 serves as the catalytic Nucleophile. Residue C106 is modified to Cysteine sulfinic acid (-SO2H); alternate. The S-palmitoyl cysteine; alternate moiety is linked to residue C106. The active site involves H126. Residue K130 forms a Glycyl lysine isopeptide (Lys-Gly) (interchain with G-Cter in SUMO) linkage. K148 carries the post-translational modification N6-acetyllysine. K182 carries the post-translational modification N6-succinyllysine.

Belongs to the peptidase C56 family. As to quaternary structure, homodimer. Binds EFCAB6/DJBP and PIAS2. Part of a ternary complex containing PARK7, EFCAB6/DJBP and AR. Interacts (via N-terminus) with OTUD7B. Interacts with BBS1, HIPK1, CLCF1 and MTERF. Forms a complex with PINK1 and PRKN. Interacts (via C-terminus) with NCF1; the interaction is enhanced by LPS and modulates NCF1 phosphorylation and membrane translocation. Interacts with NENF. Requires Deglycase activity does not require glutathione as a cofactor, however, glycated glutathione constitutes a PARK7 substrate. as cofactor. In terms of processing, sumoylated on Lys-130 by PIAS2 or PIAS4; which is essential for cell-growth promoting activity and transforming activity. Undergoes cleavage of a C-terminal peptide and subsequent activation of protease activity in response to oxidative stress. In terms of tissue distribution, ubiquitous. Detected on epididymal sperm. Highly expressed in testis and prostate. Detected at lower levels in heart, lung, brain, liver, kidney, seminal vesicle, caput and corpus epididymis.

The protein localises to the cell membrane. The protein resides in the cytoplasm. It is found in the membrane raft. It localises to the nucleus. Its subcellular location is the mitochondrion. The protein localises to the endoplasmic reticulum. It carries out the reaction N(omega)-(1-hydroxy-2-oxopropyl)-L-arginyl-[protein] + H2O = lactate + L-arginyl-[protein] + H(+). The catalysed reaction is N(6)-(1-hydroxy-2-oxopropyl)-L-lysyl-[protein] + H2O = lactate + L-lysyl-[protein] + H(+). It catalyses the reaction S-(1-hydroxy-2-oxopropyl)-L-cysteinyl-[protein] + H2O = lactate + L-cysteinyl-[protein] + H(+). The enzyme catalyses N(omega)-(1-hydroxy-2-oxoethyl)-L-arginyl-[protein] + H2O = L-arginyl-[protein] + glycolate + H(+). It carries out the reaction N(6)-(1-hydroxy-2-oxoethyl)-L-lysyl-[protein] + H2O = glycolate + L-lysyl-[protein] + H(+). The catalysed reaction is S-(1-hydroxy-2-oxoethyl)-L-cysteinyl-[protein] + H2O = glycolate + L-cysteinyl-[protein] + H(+). It catalyses the reaction N(2)-(1-hydroxy-2-oxopropyl)-dGTP + H2O = lactate + dGTP + H(+). The enzyme catalyses N(2)-(1-hydroxy-2-oxopropyl)-GTP + H2O = lactate + GTP + H(+). It carries out the reaction N(2)-(1-hydroxy-2-oxopropyl)-GDP + H2O = lactate + GDP + H(+). The catalysed reaction is N(2)-(1-hydroxy-2-oxopropyl)-GMP + H2O = lactate + GMP + H(+). It catalyses the reaction N(2)-(1-hydroxy-2-oxoethyl)-dGTP + H2O = dGTP + glycolate + H(+). The enzyme catalyses N(2)-(1-hydroxy-2-oxoethyl)-GTP + H2O = glycolate + GTP + H(+). It carries out the reaction N(2)-(1-hydroxy-2-oxoethyl)-GDP + H2O = glycolate + GDP + H(+). The catalysed reaction is N(2)-(1-hydroxy-2-oxoethyl)-GMP + H2O = glycolate + GMP + H(+). It catalyses the reaction an N(2)-(1-hydroxy-2-oxopropyl)-guanosine in RNA + H2O = a guanosine in RNA + lactate + H(+). The enzyme catalyses an N(2)-(1-hydroxy-2-oxopropyl)-2'-deoxyguanosine in DNA + H2O = a 2'-deoxyguanosine in DNA + lactate + H(+). It carries out the reaction an N(2)-(1-hydroxy-2-oxoethyl)-guanosine in RNA + H2O = a guanosine in RNA + glycolate + H(+). The catalysed reaction is an N(2)-(1-hydroxy-2-oxoethyl)-2'-deoxyguanosine in DNA + H2O = a 2'-deoxyguanosine in DNA + glycolate + H(+). Protein and nucleotide deglycase that catalyzes the deglycation of the Maillard adducts formed between amino groups of proteins or nucleotides and reactive carbonyl groups of glyoxals. Thus, functions as a protein deglycase that repairs methylglyoxal- and glyoxal-glycated proteins, and releases repaired proteins and lactate or glycolate, respectively. Deglycates cysteine, arginine and lysine residues in proteins, and thus reactivates these proteins by reversing glycation by glyoxals. Acts on early glycation intermediates (hemithioacetals and aminocarbinols), preventing the formation of advanced glycation endproducts (AGE) that cause irreversible damage. Also functions as a nucleotide deglycase able to repair glycated guanine in the free nucleotide pool (GTP, GDP, GMP, dGTP) and in DNA and RNA. Is thus involved in a major nucleotide repair system named guanine glycation repair (GG repair), dedicated to reversing methylglyoxal and glyoxal damage via nucleotide sanitization and direct nucleic acid repair. Also displays an apparent glyoxalase activity that in fact reflects its deglycase activity. Plays an important role in cell protection against oxidative stress and cell death acting as oxidative stress sensor and redox-sensitive chaperone and protease; functions probably related to its primary function. It is involved in neuroprotective mechanisms like the stabilization of NFE2L2 and PINK1 proteins, male fertility as a positive regulator of androgen signaling pathway as well as cell growth and transformation through, for instance, the modulation of NF-kappa-B signaling pathway. Eliminates hydrogen peroxide and protects cells against hydrogen peroxide-induced cell death. Required for correct mitochondrial morphology and function as well as for autophagy of dysfunctional mitochondria. Plays a role in regulating expression or stability of the mitochondrial uncoupling proteins SLC25A14 and SLC25A27 in dopaminergic neurons of the substantia nigra pars compacta and attenuates the oxidative stress induced by calcium entry into the neurons via L-type channels during pacemaking. Regulates astrocyte inflammatory responses, may modulate lipid rafts-dependent endocytosis in astrocytes and neuronal cells. In pancreatic islets, involved in the maintenance of mitochondrial reactive oxygen species (ROS) levels and glucose homeostasis in an age- and diet dependent manner. Protects pancreatic beta cells from cell death induced by inflammatory and cytotoxic setting. Binds to a number of mRNAs containing multiple copies of GG or CC motifs and partially inhibits their translation but dissociates following oxidative stress. Metal-binding protein able to bind copper as well as toxic mercury ions, enhances the cell protection mechanism against induced metal toxicity. In macrophages, interacts with the NADPH oxidase subunit NCF1 to direct NADPH oxidase-dependent ROS production, and protects against sepsis. The protein is Parkinson disease protein 7 homolog of Rattus norvegicus (Rat).